The sequence spans 572 residues: Formate--tetrahydrofolate ligase (572 aa).

Position 65 to 72 (65 to 72 (TPLGEGKT)) interacts with ATP.

The protein belongs to the formate--tetrahydrofolate ligase family.

The enzyme catalyses (6S)-5,6,7,8-tetrahydrofolate + formate + ATP = (6R)-10-formyltetrahydrofolate + ADP + phosphate. Its pathway is one-carbon metabolism; tetrahydrofolate interconversion. The chain is Formate--tetrahydrofolate ligase from Chloroflexus aggregans (strain MD-66 / DSM 9485).